Here is a 330-residue protein sequence, read N- to C-terminus: o-succinylbenzoate synthase (330 aa).

K130 (proton donor) is an active-site residue. The Mg(2+) site is built by D155, E184, and D206. K228 serves as the catalytic Proton acceptor.

This sequence belongs to the mandelate racemase/muconate lactonizing enzyme family. MenC type 1 subfamily. Monomer. Requires a divalent metal cation as cofactor.

The catalysed reaction is (1R,6R)-6-hydroxy-2-succinyl-cyclohexa-2,4-diene-1-carboxylate = 2-succinylbenzoate + H2O. The protein operates within quinol/quinone metabolism; 1,4-dihydroxy-2-naphthoate biosynthesis; 1,4-dihydroxy-2-naphthoate from chorismate: step 4/7. It participates in cofactor biosynthesis; phylloquinone biosynthesis. Functionally, converts 2-succinyl-6-hydroxy-2,4-cyclohexadiene-1-carboxylate (SHCHC) to 2-succinylbenzoate (OSB). Does not show N-succinylamino acid racemase (NSAR) activity with N-succinyl-L-phenylglycine as substrate. The polypeptide is o-succinylbenzoate synthase (Bdellovibrio bacteriovorus (strain ATCC 15356 / DSM 50701 / NCIMB 9529 / HD100)).